Consider the following 549-residue polypeptide: Longitudinals lacking protein, isoforms H/M/V (549 aa).

Residues 32–97 (VDCTLAAEGK…MYRGEVNISQ (66 aa)) form the BTB domain. Disordered regions lie at residues 115 to 200 (LSDN…SSVL) and 228 to 340 (SSGP…ASAS). Composition is skewed to low complexity over residues 162-175 (SGDV…SSSP), 228-251 (SSGP…LTST), 263-293 (TSST…QTTS), and 329-340 (NSATGPNPASAS).

As to expression, mostly neuronal.

The protein resides in the nucleus. Putative transcription factor required for axon growth and guidance in the central and peripheral nervous systems. Repels CNS axons away from the midline by promoting the expression of the midline repellent sli and its receptor robo. This chain is Longitudinals lacking protein, isoforms H/M/V, found in Drosophila melanogaster (Fruit fly).